Consider the following 298-residue polypeptide: Estradiol 17-beta-dehydrogenase 11 (298 aa).

The signal sequence occupies residues 1–21 (MKYLLDLILLLPLLIVFSIES). An NADP(+)-binding site is contributed by 40-64 (LITGAGHGIGRLTAYEFAKLNTKLV). Serine 172 is a substrate binding site. Tyrosine 185 acts as the Proton acceptor in catalysis.

This sequence belongs to the short-chain dehydrogenases/reductases (SDR) family. 17-beta-HSD 3 subfamily. Expressed in the liver (at protein level). Also expressed in the intestine and, at much lower levels, in the kidney.

The protein resides in the endoplasmic reticulum. The protein localises to the lipid droplet. It carries out the reaction 17beta-estradiol + NAD(+) = estrone + NADH + H(+). The enzyme catalyses 17beta-estradiol + NADP(+) = estrone + NADPH + H(+). Its function is as follows. Can convert androstan-3-alpha,17-beta-diol (3-alpha-diol) to androsterone in vitro, suggesting that it may participate in androgen metabolism during steroidogenesis. May act by metabolizing compounds that stimulate steroid synthesis and/or by generating metabolites that inhibit it. Has no activity toward DHEA (dehydroepiandrosterone), or A-dione (4-androste-3,17-dione), and only a slight activity toward testosterone to A-dione. This is Estradiol 17-beta-dehydrogenase 11 (Hsd17b11) from Mus musculus (Mouse).